Here is a 901-residue protein sequence, read N- to C-terminus: HTH-type transcriptional regulator MalT (901 aa).

39-46 contributes to the ATP binding site; sequence SPAGYGKT. The region spanning 829-894 is the HTH luxR-type domain; sequence ELIRTSPLTQ…DAVQHAQQLL (66 aa). The H-T-H motif DNA-binding region spans 853 to 872; that stretch reads NDQIAGELDVAATTIKTHIR.

The protein belongs to the MalT family. In terms of assembly, monomer in solution. Oligomerizes to an active state in the presence of the positive effectors ATP and maltotriose.

Activated by ATP and maltotriose, which are both required for DNA binding. Functionally, positively regulates the transcription of the maltose regulon whose gene products are responsible for uptake and catabolism of malto-oligosaccharides. Specifically binds to the promoter region of its target genes, recognizing a short DNA motif called the MalT box. In Cronobacter sakazakii (strain ATCC BAA-894) (Enterobacter sakazakii), this protein is HTH-type transcriptional regulator MalT.